We begin with the raw amino-acid sequence, 202 residues long: MKIQKVLVIKSSMTENLPSGSFSSALSDKFMEYYRKENPIDKIIELNLNDQKDLISLSSQNFNTFFTDGVSDKYIDQLKSVDKVVISSPMTNFNYTALLKNYLDRILVANKTFSYKYSKKGEAIGLLPHLKVQILTTQGAPLGWYTWGDHTKNLEGTFEFIGAKVAKSVVMDGLKTPQYSSLKAPEALDLFDKVIKTAAENF.

FMN-binding positions include Ser12 and Ser21–Ser23.

It belongs to the azoreductase type 1 family. As to quaternary structure, homodimer. Requires FMN as cofactor.

The catalysed reaction is 2 a quinone + NADH + H(+) = 2 a 1,4-benzosemiquinone + NAD(+). It carries out the reaction N,N-dimethyl-1,4-phenylenediamine + anthranilate + 2 NAD(+) = 2-(4-dimethylaminophenyl)diazenylbenzoate + 2 NADH + 2 H(+). In terms of biological role, quinone reductase that provides resistance to thiol-specific stress caused by electrophilic quinones. Functionally, also exhibits azoreductase activity. Catalyzes the reductive cleavage of the azo bond in aromatic azo compounds to the corresponding amines. The polypeptide is FMN-dependent NADH:quinone oxidoreductase (Mycoplasma mobile (strain ATCC 43663 / 163K / NCTC 11711) (Mesomycoplasma mobile)).